The sequence spans 723 residues: Dipeptidyl aminopeptidase BI (723 aa).

The signal sequence occupies residues 1–23 (MKPTSLLLAATVLMSTPITSALA). Catalysis depends on charge relay system residues Ser-574, Asp-659, and His-694.

It belongs to the peptidase S9A family. In terms of assembly, monomer.

With respect to regulation, nearly completely inhibited by 0.5 mM ZnCl(2), 0.1 mM N-tosyl-L-lysyl chloromethyl ketone (TLCK) and 0.1 mM leupeptin. Strongly inhibited by 0.5 mM CoCl(2) and 0.1 mM chymostatin. Activity is hardly affected by general serine protease inhibitors phenylmethanesulfonyl fluoride (PMSF), diisopropyl fluorophosphate (DFP) and N-tosyl-L-phenyl-alanyl chloromethyl ketone (TPCK) or by aspartyl protease inhibitor pepstatin A or by CaCl(2) and EDTA. Cysteine protease inhibitors, such as N-ethylmaleimide (NEM), iodoacetic acid and L-trans-epoxysuccinyl-leucylamido(4-guanido)butane (E-64) have no effect on activity. Functionally, sequentially removes dipeptide units (NH3-P2-P1-) from the amino termini of peptides and proteins. Is able to catalyze the removal of Asp-Arg from the amino termini of angiotensins I and II. Has slight endopeptidase activity on N-terminally blocked peptide derivatives which contain arginine residues at the P1 position. Does not hydrolyze Ala-Ala-Ala and Ala-Ala-Ala-Ala substrates or insulin beta chain. The protein is Dipeptidyl aminopeptidase BI of Pseudoxanthomonas mexicana.